The chain runs to 263 residues: 3-deoxy-manno-octulosonate cytidylyltransferase (263 aa).

This sequence belongs to the KdsB family.

It is found in the cytoplasm. The catalysed reaction is 3-deoxy-alpha-D-manno-oct-2-ulosonate + CTP = CMP-3-deoxy-beta-D-manno-octulosonate + diphosphate. It participates in nucleotide-sugar biosynthesis; CMP-3-deoxy-D-manno-octulosonate biosynthesis; CMP-3-deoxy-D-manno-octulosonate from 3-deoxy-D-manno-octulosonate and CTP: step 1/1. It functions in the pathway bacterial outer membrane biogenesis; lipopolysaccharide biosynthesis. Activates KDO (a required 8-carbon sugar) for incorporation into bacterial lipopolysaccharide in Gram-negative bacteria. The chain is 3-deoxy-manno-octulosonate cytidylyltransferase from Burkholderia mallei (strain NCTC 10229).